The chain runs to 462 residues: Glycine--tRNA ligase (462 aa).

The substrate site is built by arginine 101 and glutamate 164. Residues 196–198 (RNE), 206–211 (FRTREF), 283–284 (EL), and 327–330 (GVDR) contribute to the ATP site. Position 211–215 (211–215 (FEQME)) interacts with substrate. Residue 323-327 (EPSAG) participates in substrate binding.

The protein belongs to the class-II aminoacyl-tRNA synthetase family. Homodimer.

The protein localises to the cytoplasm. The enzyme catalyses tRNA(Gly) + glycine + ATP = glycyl-tRNA(Gly) + AMP + diphosphate. In terms of biological role, catalyzes the attachment of glycine to tRNA(Gly). In Thermobifida fusca (strain YX), this protein is Glycine--tRNA ligase.